Here is a 46-residue protein sequence, read N- to C-terminus: Major cold shock protein (46 aa).

The CSD domain occupies 1-46; that stretch reads DKGFGFITPADGSKDVFVHFSAIQSNDFKTLDEGQKVEFSIENGAK.

In terms of assembly, homodimer.

The protein localises to the cytoplasm. The chain is Major cold shock protein (cspA) from Yersinia enterocolitica.